Consider the following 136-residue polypeptide: Large-conductance mechanosensitive channel (136 aa).

4 helical membrane-spanning segments follow: residues alanine 9 to phenylalanine 29, isoleucine 32 to valine 52, phenylalanine 54 to alanine 74, and isoleucine 79 to isoleucine 99.

The protein belongs to the MscL family. In terms of assembly, homopentamer.

The protein resides in the cell inner membrane. Channel that opens in response to stretch forces in the membrane lipid bilayer. May participate in the regulation of osmotic pressure changes within the cell. The polypeptide is Large-conductance mechanosensitive channel (Vibrio cholerae serotype O1 (strain ATCC 39541 / Classical Ogawa 395 / O395)).